A 336-amino-acid polypeptide reads, in one-letter code: MSTPVKAAVFGTGSWGTAFGMVLADAGCDVTLWARRAELADAVNSTRTNPDYLPGVELPENLRATTDPAEAARAADFTVLAVPSQTLRGNLAEWVPLLAPDTVLVSLMKGVELGSAMRMSEVVEDVAKVGADRIAVVTGPNLAREIAARMPAAAVVACANEAVAQRLQAACHTPYFRPYTNTDVVGCELGGAVKNVIGLAVGIADGMGLGDNAKGSLITRGLAETTRLGLVMGADPLTFSGLAGLGDLVATCSSPLSRNHTFGTNLGRGMTLQETIAVTKQTAEGVKSCESVLDLARRHGVDMPITETVVGIVHEGKPPVVALKELMSRSAKPERR.

Residues S14, W15, R35, R36, and K109 each coordinate NADPH. Residues K109 and G139 each coordinate sn-glycerol 3-phosphate. A143 contributes to the NADPH binding site. Sn-glycerol 3-phosphate contacts are provided by K194, D247, S257, R258, and N259. The Proton acceptor role is filled by K194. NADPH is bound at residue R258. NADPH is bound at residue E284.

Belongs to the NAD-dependent glycerol-3-phosphate dehydrogenase family.

It is found in the cytoplasm. The catalysed reaction is sn-glycerol 3-phosphate + NAD(+) = dihydroxyacetone phosphate + NADH + H(+). The enzyme catalyses sn-glycerol 3-phosphate + NADP(+) = dihydroxyacetone phosphate + NADPH + H(+). It participates in membrane lipid metabolism; glycerophospholipid metabolism. Functionally, catalyzes the reduction of the glycolytic intermediate dihydroxyacetone phosphate (DHAP) to sn-glycerol 3-phosphate (G3P), the key precursor for phospholipid synthesis. This is Glycerol-3-phosphate dehydrogenase [NAD(P)+] from Streptomyces avermitilis (strain ATCC 31267 / DSM 46492 / JCM 5070 / NBRC 14893 / NCIMB 12804 / NRRL 8165 / MA-4680).